The sequence spans 159 residues: MSSADKNLSSYSGEIPNLSSRVFGIVVAEWNEEITEPLYEGAVEVLLKHGIPKANIIRTNVPGTFELSLGAQWLAMKKGVDAVICLGCVIQGETRHFDFICNAVSIGITEVNLKFNKPVIFGVLTTDNKEQAFDRAGGKHGNKGDEAAITALKMLAQTI.

5-amino-6-(D-ribitylamino)uracil contacts are provided by residues W30, 64 to 66 (TFE), and 88 to 90 (CVI). 93–94 (ET) is a binding site for (2S)-2-hydroxy-3-oxobutyl phosphate. H96 serves as the catalytic Proton donor. Position 121 (F121) interacts with 5-amino-6-(D-ribitylamino)uracil. R135 contacts (2S)-2-hydroxy-3-oxobutyl phosphate.

Belongs to the DMRL synthase family.

The enzyme catalyses (2S)-2-hydroxy-3-oxobutyl phosphate + 5-amino-6-(D-ribitylamino)uracil = 6,7-dimethyl-8-(1-D-ribityl)lumazine + phosphate + 2 H2O + H(+). Its pathway is cofactor biosynthesis; riboflavin biosynthesis; riboflavin from 2-hydroxy-3-oxobutyl phosphate and 5-amino-6-(D-ribitylamino)uracil: step 1/2. In terms of biological role, catalyzes the formation of 6,7-dimethyl-8-ribityllumazine by condensation of 5-amino-6-(D-ribitylamino)uracil with 3,4-dihydroxy-2-butanone 4-phosphate. This is the penultimate step in the biosynthesis of riboflavin. This is 6,7-dimethyl-8-ribityllumazine synthase from Cytophaga hutchinsonii (strain ATCC 33406 / DSM 1761 / CIP 103989 / NBRC 15051 / NCIMB 9469 / D465).